Consider the following 259-residue polypeptide: uncharacterized protein (259 aa).

Belongs to the chlamydial CPn_0128/CT_035/TC_0305 family.

This is an uncharacterized protein from Chlamydia muridarum (strain MoPn / Nigg).